Here is a 150-residue protein sequence, read N- to C-terminus: Arginine repressor (150 aa).

Belongs to the ArgR family.

The protein localises to the cytoplasm. It functions in the pathway amino-acid biosynthesis; L-arginine biosynthesis [regulation]. Its function is as follows. Regulates arginine biosynthesis genes. The chain is Arginine repressor from Staphylococcus aureus (strain Mu3 / ATCC 700698).